Consider the following 234-residue polypeptide: MEFSSAFESGVLLQRYKRFLTDITLDNGEEVTIHCPNTGSMRNCLFVGEKVWFSVSDNPKRKYSRTWELAQTPEGHIIGINTGRANALAEEAINNGIITELQGYGSLRREVKYGSENSRIDILLEDADKANCYIEVKSCTLLEQGLGYFPDAVTTRGQKHLRELMEMVEQGQRAVLLFVVQHSGINCVQAAAHIDPSYAALLSEAHAKGVEIIAYKADSSPIEARLVKSCPVRL.

The protein belongs to the SfsA family.

The polypeptide is Sugar fermentation stimulation protein homolog (Shewanella halifaxensis (strain HAW-EB4)).